The chain runs to 479 residues: Acyltransferase easC (479 aa).

H161 acts as the Proton acceptor in catalysis.

The protein belongs to the plant acyltransferase family. As to quaternary structure, monomer.

Its pathway is antibiotic biosynthesis. Functionally, acyltransferase; part of the gene cluster that mediates the biosynthesis of emericellamides, secondary metabolites acting as antibiotics. The biosynthesis of emericellamides initiates from the highly reducing polyketide synthase easB which catalyzes the formation of the linear polyketide chain. EasB produces several polyketides that can be further processed by the downstream enzymes. The polyketides are released from easB as linear polyketide carboxylic acids, which are converted to CoA thioesters by the acyl-CoA ligase easD. The substrates are then loaded onto the acyltransferase easC, which shuttles them to the first thiolation (T) domain of the nonribosomal peptide synthetase easA. EasA then performs condensation of the polyketides with one glycine, two alanine, one valine and one leucine residues. A last step of cyclization leads to the production of emericellamides. This Emericella nidulans (strain FGSC A4 / ATCC 38163 / CBS 112.46 / NRRL 194 / M139) (Aspergillus nidulans) protein is Acyltransferase easC.